Here is a 79-residue protein sequence, read N- to C-terminus: U24-theraphotoxin-Cg1a (79 aa).

The N-terminal stretch at 1 to 19 (MRVLFIIAVLALISVGCYA) is a signal peptide. The propeptide occupies 20 to 44 (SEMKDRSSRNEVLSAIFAIEEPQER). 3 disulfides stabilise this stretch: Cys-46-Cys-61, Cys-53-Cys-66, and Cys-60-Cys-73. Tryptophan amide is present on Trp-78.

This sequence belongs to the neurotoxin 10 (Hwtx-1) family. 35 (Jztx-27) subfamily. As to expression, expressed by the venom gland.

The protein resides in the secreted. Its function is as follows. Probable ion channel inhibitor. This chain is U24-theraphotoxin-Cg1a, found in Chilobrachys guangxiensis (Chinese earth tiger tarantula).